The chain runs to 259 residues: UPF0739 protein C1orf74 homolog (259 aa).

The protein belongs to the UPF0739 family.

In Danio rerio (Zebrafish), this protein is UPF0739 protein C1orf74 homolog.